The primary structure comprises 213 residues: Holliday junction resolvase RecU (213 aa).

Residues threonine 99, aspartate 101, glutamate 114, and glutamine 133 each coordinate Mg(2+).

It belongs to the RecU family. Mg(2+) serves as cofactor.

It is found in the cytoplasm. The enzyme catalyses Endonucleolytic cleavage at a junction such as a reciprocal single-stranded crossover between two homologous DNA duplexes (Holliday junction).. Its function is as follows. Endonuclease that resolves Holliday junction intermediates in genetic recombination. Cleaves mobile four-strand junctions by introducing symmetrical nicks in paired strands. Promotes annealing of linear ssDNA with homologous dsDNA. Required for DNA repair, homologous recombination and chromosome segregation. This chain is Holliday junction resolvase RecU, found in Lactococcus lactis subsp. cremoris (strain SK11).